A 170-amino-acid polypeptide reads, in one-letter code: Adenine phosphoribosyltransferase (170 aa).

It belongs to the purine/pyrimidine phosphoribosyltransferase family. In terms of assembly, homodimer.

The protein localises to the cytoplasm. It carries out the reaction AMP + diphosphate = 5-phospho-alpha-D-ribose 1-diphosphate + adenine. It participates in purine metabolism; AMP biosynthesis via salvage pathway; AMP from adenine: step 1/1. In terms of biological role, catalyzes a salvage reaction resulting in the formation of AMP, that is energically less costly than de novo synthesis. The protein is Adenine phosphoribosyltransferase of Brevibacillus brevis (strain 47 / JCM 6285 / NBRC 100599).